The sequence spans 119 residues: Basic phospholipase A2 homolog 1 (119 aa).

Cystine bridges form between Cys11/Cys72, Cys27/Cys118, Cys29/Cys45, Cys44/Cys99, Cys51/Cys92, Cys61/Cys85, and Cys79/Cys90. Positions 107–117 (KENYNIDPKKR) are important for membrane-damaging activities in eukaryotes and bacteria; heparin-binding.

Belongs to the phospholipase A2 family. Group I subfamily. D49 sub-subfamily. In terms of tissue distribution, expressed by the venom gland.

It localises to the secreted. This chain is Basic phospholipase A2 homolog 1, found in Notechis scutatus scutatus (Mainland tiger snake).